We begin with the raw amino-acid sequence, 585 residues long: Probable glucomannan 4-beta-mannosyltransferase 7 (585 aa).

The helical transmembrane segment at 87–107 (VIAPTLQVAVWVCMVMSVMLV) threads the bilayer. The active site involves Asp-188. Asp-247 and Asp-249 together coordinate substrate. The active site involves Asp-341. 4 consecutive transmembrane segments (helical) span residues 420–440 (VVAP…SVMI), 443–463 (LFIP…ITTI), 534–554 (LPEI…LIFH), and 563–583 (LYLQ…NFAC).

It belongs to the glycosyltransferase 2 family. Plant cellulose synthase-like A subfamily.

The protein resides in the golgi apparatus membrane. It carries out the reaction GDP-mannose + (glucomannan)n = GDP + (glucomannan)n+1.. Functionally, probable mannan synthase which consists of a 4-beta-mannosyltransferase activity on mannan using GDP-mannose. The beta-1,4-mannan product is the backbone for galactomannan synthesis by galactomannan galactosyltransferase. Galactomannan is a noncellulosic polysaccharides of plant cell wall. This chain is Probable glucomannan 4-beta-mannosyltransferase 7, found in Oryza sativa subsp. japonica (Rice).